The following is a 341-amino-acid chain: Glucokinase (341 aa).

18–23 (GDIGGT) serves as a coordination point for ATP.

Belongs to the bacterial glucokinase family.

The protein localises to the cytoplasm. It carries out the reaction D-glucose + ATP = D-glucose 6-phosphate + ADP + H(+). This Rhizobium etli (strain CIAT 652) protein is Glucokinase.